The following is a 290-amino-acid chain: Potassium-transporting ATPase subunit beta (290 aa).

Over Met1 to Arg36 the chain is Cytoplasmic. The chain crosses the membrane as a helical; Signal-anchor for type II membrane protein span at residues Trp37 to Leu57. The Extracellular portion of the chain corresponds to Cys58 to Gln290. Residues Asn99, Asn103, Asn130, Asn146, and Asn161 are each glycosylated (N-linked (GlcNAc...) asparagine). A disulfide bridge connects residues Cys131 and Cys152. An intrachain disulfide couples Cys162 to Cys178. N-linked (GlcNAc...) asparagine glycosylation is found at Asn193 and Asn221. Residues Ser194–Gln290 form an immunoglobulin-like region. A disulfide bridge links Cys201 with Cys262.

The protein belongs to the X(+)/potassium ATPases subunit beta family. As to quaternary structure, the ATPase pump is composed of two subunits: alpha (catalytic) and beta (regulatory). Interacts with alpha subunit ATP12A; this interaction is required for the formation of a functionally active pump and targeting at the plasma membrane. Interacts (via N-terminus) with alpha subunit ATP4A (via the P-domain). In terms of processing, N-glycosylation is necessary for assembly and functional expression of the pump at the plasma membrane.

The protein resides in the apical cell membrane. Its subcellular location is the cell membrane. In terms of biological role, the beta subunit of the gastric H(+)/K(+) ATPase pump which transports H(+) ions in exchange for K(+) ions across the apical membrane of parietal cells. Plays a structural and regulatory role in the assembly and membrane targeting of a functionally active pump. Within a transport cycle, the transfer of a H(+) ion across the membrane is coupled to ATP hydrolysis and is associated with a transient phosphorylation of the alpha subunit that shifts the pump conformation from inward-facing (E1) to outward-facing state (E2). Interacts with the phosphorylation domain of the alpha subunit and functions as a ratchet, stabilizing the lumenal-open E2 conformation and preventing the reverse reaction of the transport cycle. This is Potassium-transporting ATPase subunit beta (ATP4B) from Canis lupus familiaris (Dog).